We begin with the raw amino-acid sequence, 615 residues long: Dihydroxy-acid dehydratase (615 aa).

Aspartate 81 is a binding site for Mg(2+). Cysteine 122 provides a ligand contact to [2Fe-2S] cluster. Mg(2+) contacts are provided by aspartate 123 and lysine 124. The residue at position 124 (lysine 124) is an N6-carboxylysine. Cysteine 195 is a [2Fe-2S] cluster binding site. Glutamate 491 contacts Mg(2+). The Proton acceptor role is filled by serine 517.

The protein belongs to the IlvD/Edd family. In terms of assembly, homodimer. Requires [2Fe-2S] cluster as cofactor. Mg(2+) is required as a cofactor.

The enzyme catalyses (2R)-2,3-dihydroxy-3-methylbutanoate = 3-methyl-2-oxobutanoate + H2O. It catalyses the reaction (2R,3R)-2,3-dihydroxy-3-methylpentanoate = (S)-3-methyl-2-oxopentanoate + H2O. The protein operates within amino-acid biosynthesis; L-isoleucine biosynthesis; L-isoleucine from 2-oxobutanoate: step 3/4. It functions in the pathway amino-acid biosynthesis; L-valine biosynthesis; L-valine from pyruvate: step 3/4. Functionally, functions in the biosynthesis of branched-chain amino acids. Catalyzes the dehydration of (2R,3R)-2,3-dihydroxy-3-methylpentanoate (2,3-dihydroxy-3-methylvalerate) into 2-oxo-3-methylpentanoate (2-oxo-3-methylvalerate) and of (2R)-2,3-dihydroxy-3-methylbutanoate (2,3-dihydroxyisovalerate) into 2-oxo-3-methylbutanoate (2-oxoisovalerate), the penultimate precursor to L-isoleucine and L-valine, respectively. The chain is Dihydroxy-acid dehydratase from Pseudoalteromonas atlantica (strain T6c / ATCC BAA-1087).